The following is a 388-amino-acid chain: S-adenosylmethionine synthase 1 (388 aa).

Glu11 provides a ligand contact to Mg(2+). An ATP-binding site is contributed by His17. Glu45 is a binding site for K(+). Positions 58 and 101 each coordinate L-methionine. ATP is bound by residues 168 to 170 (DAK), 233 to 236 (SGRF), Asp244, 250 to 251 (RK), Ala267, Lys271, and Lys275. L-methionine is bound at residue Asp244. An L-methionine-binding site is contributed by Lys275.

The protein belongs to the AdoMet synthase family. As to quaternary structure, homotetramer. It depends on Mn(2+) as a cofactor. Mg(2+) is required as a cofactor. Co(2+) serves as cofactor. The cofactor is K(+). As to expression, mostly in Roots.

It localises to the cytoplasm. It catalyses the reaction L-methionine + ATP + H2O = S-adenosyl-L-methionine + phosphate + diphosphate. The protein operates within amino-acid biosynthesis; S-adenosyl-L-methionine biosynthesis; S-adenosyl-L-methionine from L-methionine: step 1/1. Functionally, catalyzes the formation of S-adenosylmethionine from methionine and ATP. The reaction comprises two steps that are both catalyzed by the same enzyme: formation of S-adenosylmethionine (AdoMet) and triphosphate, and subsequent hydrolysis of the triphosphate. The chain is S-adenosylmethionine synthase 1 (SAMS1) from Pinus contorta (Shore pine).